Here is a 295-residue protein sequence, read N- to C-terminus: Tissue factor (295 aa).

The first 32 residues, 1–32 (METPAWPRVPRPETAVARTLLLGWVFAQVAGA), serve as a signal peptide directing secretion. The Extracellular segment spans residues 33-251 (SGTTNTVAAY…MGQEKGEFRE (219 aa)). 2 short sequence motifs (WKS motif) span residues 46-48 (WKS) and 77-79 (WKS). Cys81 and Cys89 are oxidised to a cystine. Asn156 and Asn169 each carry an N-linked (GlcNAc...) asparagine glycan. The WKS motif signature appears at 190–192 (WKS). The cysteines at positions 218 and 241 are disulfide-linked. The chain crosses the membrane as a helical span at residues 252–274 (IFYIIGAVVFVVIILVIILAISL). The Cytoplasmic portion of the chain corresponds to 275–295 (HKCRKAGVGQSWKENSPLNVS). Cys277 carries the S-palmitoyl cysteine lipid modification.

This sequence belongs to the tissue factor family. As to quaternary structure, interacts with HSPE; the interaction, inhibited by heparin, promotes the generation of activated factor X and activates coagulation in the presence of activated factor VII. In terms of tissue distribution, lung, placenta and pancreas.

The protein resides in the membrane. It is found in the secreted. Its function is as follows. Initiates blood coagulation by forming a complex with circulating factor VII or VIIa. The [TF:VIIa] complex activates factors IX or X by specific limited proteolysis. TF plays a role in normal hemostasis by initiating the cell-surface assembly and propagation of the coagulation protease cascade. This Homo sapiens (Human) protein is Tissue factor (F3).